We begin with the raw amino-acid sequence, 601 residues long: Elongation factor 4 (601 aa).

In terms of domain architecture, tr-type G spans 5–187 (ENIRNFCIIA…AIVHHLPAPK (183 aa)). Residues 17-22 (DHGKST) and 134-137 (NKID) contribute to the GTP site.

The protein belongs to the TRAFAC class translation factor GTPase superfamily. Classic translation factor GTPase family. LepA subfamily.

The protein localises to the cell inner membrane. It carries out the reaction GTP + H2O = GDP + phosphate + H(+). Functionally, required for accurate and efficient protein synthesis under certain stress conditions. May act as a fidelity factor of the translation reaction, by catalyzing a one-codon backward translocation of tRNAs on improperly translocated ribosomes. Back-translocation proceeds from a post-translocation (POST) complex to a pre-translocation (PRE) complex, thus giving elongation factor G a second chance to translocate the tRNAs correctly. Binds to ribosomes in a GTP-dependent manner. The polypeptide is Elongation factor 4 (Desulfovibrio desulfuricans (strain ATCC 27774 / DSM 6949 / MB)).